The sequence spans 137 residues: Small ribosomal subunit protein uS19 (137 aa).

Belongs to the universal ribosomal protein uS19 family.

Functionally, protein S19 forms a complex with S13 that binds strongly to the 16S ribosomal RNA. This is Small ribosomal subunit protein uS19 from Methanoculleus marisnigri (strain ATCC 35101 / DSM 1498 / JR1).